The chain runs to 400 residues: Egl nine homolog 1 (400 aa).

The residue at position 2 (A2) is an N-acetylalanine. Residues 6–20 (GGPGVLSASERDRQY) are required for nuclear export. The residue at position 12 (S12) is a Phosphoserine. Positions 21, 24, 33, 36, 42, 46, 54, and 58 each coordinate Zn(2+). An MYND-type; atypical zinc finger spans residues 21 to 58 (CELCGKMENLLRCGRCRSSFYCCKEHQRQDWKKHKLVC). Positions 62-74 (EAPRAQPAPAQPR) are enriched in low complexity. The tract at residues 62-161 (EAPRAQPAPA…PGGGLRPNGQ (100 aa)) is disordered. A Phosphoserine modification is found at S114. Gly residues predominate over residues 142–157 (AGGGPGEALSPGGGLR). S-nitrosocysteine occurs at positions 178 and 185. Positions 218-228 (VSQKSDSSKDI) are beta(2)beta(3) 'finger-like' loop. Residues 271–369 (GRTKAMVACY…RYAITVWYFD (99 aa)) enclose the Fe2OG dioxygenase domain. An S-nitrosocysteine modification is found at C279. Fe cation is bound by residues H290 and D292. S-nitrosocysteine is present on residues C300 and C303. H351 contacts Fe cation. R360 lines the 2-oxoglutarate pocket.

In terms of assembly, monomer. Interacts with ING4; the interaction inhibits the hydroxylation of HIF alpha proteins. Interacts with PTGES3 (via PXLE motif); thereby recruiting EGLN1 to the HSP90 pathway to facilitate HIF alpha proteins hydroxylation. Interacts with LIMD1. Found in a complex composed of LIMD1, VHL, EGLN1/PHD2, ELOB and CUL2. Interacts with EPAS1. Interacts with CBFA2T3 and HIF1A. It depends on Fe(2+) as a cofactor. L-ascorbate serves as cofactor. Post-translationally, S-nitrosylation inhibits the enzyme activity up to 60% under aerobic conditions. Chelation of Fe(2+) has no effect on the S-nitrosylation. It is uncertain whether nitrosylation occurs on Cys-300 or Cys-303. Expressed in heart, brain liver, skeletal muscle and kidney. Low levels were detected in the lung. Constitutively expressed during differentiation of C2C12 skeletal myocytes.

The protein resides in the cytoplasm. It is found in the nucleus. The catalysed reaction is L-prolyl-[hypoxia-inducible factor alpha subunit] + 2-oxoglutarate + O2 = trans-4-hydroxy-L-prolyl-[hypoxia-inducible factor alpha subunit] + succinate + CO2. Cellular oxygen sensor that catalyzes, under normoxic conditions, the post-translational formation of 4-hydroxyproline in hypoxia-inducible factor (HIF) alpha proteins. Hydroxylates a specific proline found in each of the oxygen-dependent degradation (ODD) domains (N-terminal, NODD, and C-terminal, CODD) of HIF1A. Also hydroxylates HIF2A. Has a preference for the CODD site for both HIF1A and HIF1B. Hydroxylated HIFs are then targeted for proteasomal degradation via the von Hippel-Lindau ubiquitination complex. Under hypoxic conditions, the hydroxylation reaction is attenuated allowing HIFs to escape degradation resulting in their translocation to the nucleus, heterodimerization with HIF1B, and increased expression of hypoxy-inducible genes. EGLN1 is the most important isozyme under normoxia and, through regulating the stability of HIF1, involved in various hypoxia-influenced processes such as angiogenesis in retinal and cardiac functionality. Target proteins are preferentially recognized via a LXXLAP motif. The protein is Egl nine homolog 1 (Egln1) of Mus musculus (Mouse).